We begin with the raw amino-acid sequence, 645 residues long: Macrolide export ATP-binding/permease protein MacB (645 aa).

One can recognise an ABC transporter domain in the interval Ile-6–Lys-244. Gly-42–Ser-49 is a binding site for ATP. A run of 4 helical transmembrane segments spans residues Ala-271 to Gly-291, Phe-520 to Met-540, Val-577 to Ile-597, and Pro-608 to Leu-628.

Belongs to the ABC transporter superfamily. Macrolide exporter (TC 3.A.1.122) family. As to quaternary structure, homodimer.

It is found in the cell inner membrane. Functionally, non-canonical ABC transporter that contains transmembrane domains (TMD), which form a pore in the inner membrane, and an ATP-binding domain (NBD), which is responsible for energy generation. Confers resistance against macrolides. The protein is Macrolide export ATP-binding/permease protein MacB of Hyphomonas neptunium (strain ATCC 15444).